Here is a 255-residue protein sequence, read N- to C-terminus: MDNLRRKEKILIADDESSIRRILETRLSIIGYEVLTAPDGRSALFLFHKEHPNLVVLDVMMPKIDGYGVCQEIRKESDIPIIMLTALGDVTDRITGLELGADDYVVKPFSPKELEARIRCVLRRVDKFYFSNTFTNSGIINIGFLKIDINRKQVYKNEERIRLTGMEFNLLELLISNSGEPLSRTTILEEVWGYTPERHLDTRVVDVHISRLRAKLEDDPSNPELILTSRGTGYLFQRIMEINKNYNPIIQIQKI.

In terms of domain architecture, Response regulatory spans 9 to 122; the sequence is KILIADDESS…ELEARIRCVL (114 aa). Aspartate 58 is modified (4-aspartylphosphate). The H-T-H motif DNA-binding region spans 78–96; the sequence is DIPIIMLTALGDVTDRITG. The ompR/PhoB-type DNA-binding region spans 137 to 238; sequence SGIINIGFLK…SRGTGYLFQR (102 aa).

Its subcellular location is the plastid. The protein resides in the chloroplast. Probable promoter-specific protein mediating the interaction between DNA and RNA polymerase. The protein is Probable transcriptional regulator ycf27 (ycf27) of Galdieria sulphuraria (Red alga).